We begin with the raw amino-acid sequence, 232 residues long: Ion-translocating oxidoreductase complex subunit E (232 aa).

6 helical membrane passes run 18-38 (ALVQ…VTNG), 39-59 (LGLG…VSII), 69-89 (IPIF…LMNA), 93-113 (ELYQ…AIIG), 128-148 (AFDG…LGAM), and 182-202 (PFLL…LIAA).

This sequence belongs to the NqrDE/RnfAE family. In terms of assembly, the complex is composed of six subunits: RnfA, RnfB, RnfC, RnfD, RnfE and RnfG.

It is found in the cell inner membrane. Part of a membrane-bound complex that couples electron transfer with translocation of ions across the membrane. In Pseudoalteromonas atlantica (strain T6c / ATCC BAA-1087), this protein is Ion-translocating oxidoreductase complex subunit E.